Consider the following 407-residue polypeptide: Argininosuccinate synthase (407 aa).

ATP contacts are provided by residues 10–18 (AYSGGLDTS) and A37. The L-citrulline site is built by Y88 and S93. Position 118 (G118) interacts with ATP. The L-aspartate site is built by T120, N124, and D125. N124 provides a ligand contact to L-citrulline. R128, S180, S189, E265, and Y277 together coordinate L-citrulline.

This sequence belongs to the argininosuccinate synthase family. Type 1 subfamily. Homotetramer.

It is found in the cytoplasm. It catalyses the reaction L-citrulline + L-aspartate + ATP = 2-(N(omega)-L-arginino)succinate + AMP + diphosphate + H(+). It participates in amino-acid biosynthesis; L-arginine biosynthesis; L-arginine from L-ornithine and carbamoyl phosphate: step 2/3. The sequence is that of Argininosuccinate synthase from Alcanivorax borkumensis (strain ATCC 700651 / DSM 11573 / NCIMB 13689 / SK2).